A 698-amino-acid chain; its full sequence is Ubiquitin-like modifier-activating enzyme ATG7 (698 aa).

The FAP motif motif lies at 11 to 13; that stretch reads FAP. K41 participates in a covalent cross-link: Glycyl lysine isopeptide (Lys-Gly) (interchain with G-Cter in ubiquitin). C567 serves as the catalytic Glycyl thioester intermediate. A Phosphoserine modification is found at S693.

It belongs to the ATG7 family. Homodimer. Interacts with ATG3; this interaction is essential for the transfer of ATG8-like proteins's thioester from ATG7 to ATG3 and plays a role in the conjugation of ATG12 to ATG5. Interacts with ATG12. Forms intermediate conjugates with GABARAPL1. Forms intermediate conjugates with ATG8-like proteins such as GABARAP, GABARAPL2 or MAP1LC3A. Interacts with EP300 acetyltransferase. Interacts with FOXO1. In terms of processing, acetylated by EP300. Polyubiquitinated on Lys-41 via 'Lys-63'-linked ubiquitin by TRIM32; this modification positiely regulates ATG8 and ATG12 activating enzyme activity leading to initiation of autophagy under metabolic stress. As to expression, widely expressed.

The protein resides in the cytoplasm. The protein localises to the preautophagosomal structure. In terms of biological role, E1-like activating enzyme involved in the 2 ubiquitin-like systems required for cytoplasm to vacuole transport (Cvt) and autophagy. Activates ATG12 for its conjugation with ATG5 as well as the ATG8 family proteins for their conjugation with phosphatidylethanolamine. Both systems are needed for the ATG8 association to Cvt vesicles and autophagosomes membranes. Required for autophagic death induced by caspase-8 inhibition. Facilitates LC3-I lipidation with phosphatidylethanolamine to form LC3-II which is found on autophagosomal membranes. Required for mitophagy which contributes to regulate mitochondrial quantity and quality by eliminating the mitochondria to a basal level to fulfill cellular energy requirements and preventing excess ROS production. Modulates p53/TP53 activity to regulate cell cycle and survival during metabolic stress. Also plays a key role in the maintenance of axonal homeostasis, the prevention of axonal degeneration, the maintenance of hematopoietic stem cells, the formation of Paneth cell granules, as well as in adipose differentiation. Plays a role in regulating the liver clock and glucose metabolism by mediating the autophagic degradation of CRY1 (clock repressor) in a time-dependent manner. This Rattus norvegicus (Rat) protein is Ubiquitin-like modifier-activating enzyme ATG7.